The sequence spans 343 residues: Serine/threonine-protein kinase SRK2C (343 aa).

The 257-residue stretch at 4–260 folds into the Protein kinase domain; the sequence is YEIVKDIGSG…IEEIKNHSWF (257 aa). ATP contacts are provided by residues 10–18 and Lys-33; that span reads IGSGNFGVA. Asp-123 (proton acceptor) is an active-site residue. Thr-158 bears the Phosphothreonine mark.

It belongs to the protein kinase superfamily. Ser/Thr protein kinase family. As to quaternary structure, interacts with I-2 and TOPP1. Expressed in seedlings.

It carries out the reaction L-seryl-[protein] + ATP = O-phospho-L-seryl-[protein] + ADP + H(+). It catalyses the reaction L-threonyl-[protein] + ATP = O-phospho-L-threonyl-[protein] + ADP + H(+). In terms of biological role, involved in gene regulation and confers tolerance to drought and osmotic stress. This chain is Serine/threonine-protein kinase SRK2C (SRK2C), found in Arabidopsis thaliana (Mouse-ear cress).